A 205-amino-acid chain; its full sequence is Small ribosomal subunit protein uS4 (205 aa).

The segment at 18–46 (NIWGRPKSPVNRREYGPGQHGQRRKGKLS) is disordered. One can recognise an S4 RNA-binding domain in the interval 94-157 (RRLDTVVYRA…KQLAFVLEAS (64 aa)).

The protein belongs to the universal ribosomal protein uS4 family. As to quaternary structure, part of the 30S ribosomal subunit. Contacts protein S5. The interaction surface between S4 and S5 is involved in control of translational fidelity.

Functionally, one of the primary rRNA binding proteins, it binds directly to 16S rRNA where it nucleates assembly of the body of the 30S subunit. In terms of biological role, with S5 and S12 plays an important role in translational accuracy. The protein is Small ribosomal subunit protein uS4 of Rhodopseudomonas palustris (strain HaA2).